Here is an 841-residue protein sequence, read N- to C-terminus: Translation initiation factor IF-2 (841 aa).

The segment at 94-258 (QRSPEEIEAE…HGFQSPTGPV (165 aa)) is disordered. Over residues 96 to 136 (SPEEIEAERKRELEERRAVENAARQKAEEEAKRRAEEEARR) the composition is skewed to basic and acidic residues. Low complexity predominate over residues 137 to 173 (QPAAAQPAGTEAVAAPVAPVEAVREAAPVAAAPAPAA). 3 stretches are compositionally biased toward basic and acidic residues: residues 174–194 (DARK…DNNR), 200–217 (DGER…EKAP), and 225–234 (TTDEESDGFR). A compositionally biased stretch (basic residues) spans 235–248 (RGGRGKAKLKKRNA). In terms of domain architecture, tr-type G spans 341-510 (SRAPVVTVMG…LLQAEVLELK (170 aa)). The segment at 350–357 (GHVDHGKT) is G1. Residue 350 to 357 (GHVDHGKT) participates in GTP binding. Residues 375 to 379 (GITQH) form a G2 region. The tract at residues 396 to 399 (DTPG) is G3. GTP is bound by residues 396–400 (DTPGH) and 450–453 (NKID). Residues 450-453 (NKID) are G4. The interval 486 to 488 (SAK) is G5.

Belongs to the TRAFAC class translation factor GTPase superfamily. Classic translation factor GTPase family. IF-2 subfamily.

Its subcellular location is the cytoplasm. One of the essential components for the initiation of protein synthesis. Protects formylmethionyl-tRNA from spontaneous hydrolysis and promotes its binding to the 30S ribosomal subunits. Also involved in the hydrolysis of GTP during the formation of the 70S ribosomal complex. The sequence is that of Translation initiation factor IF-2 from Pseudomonas fluorescens (strain SBW25).